The primary structure comprises 241 residues: Octanoyltransferase (241 aa).

The BPL/LPL catalytic domain occupies 43-228; it reads ADTPDEIWLV…RLTANLDGSP (186 aa). Residues 83–90, 159–161, and 172–174 each bind substrate; these read RGGQITYH, ALG, and GVS. The active-site Acyl-thioester intermediate is the cysteine 190.

Belongs to the LipB family.

The protein localises to the cytoplasm. It catalyses the reaction octanoyl-[ACP] + L-lysyl-[protein] = N(6)-octanoyl-L-lysyl-[protein] + holo-[ACP] + H(+). The protein operates within protein modification; protein lipoylation via endogenous pathway; protein N(6)-(lipoyl)lysine from octanoyl-[acyl-carrier-protein]: step 1/2. In terms of biological role, catalyzes the transfer of endogenously produced octanoic acid from octanoyl-acyl-carrier-protein onto the lipoyl domains of lipoate-dependent enzymes. Lipoyl-ACP can also act as a substrate although octanoyl-ACP is likely to be the physiological substrate. The protein is Octanoyltransferase of Paraburkholderia phytofirmans (strain DSM 17436 / LMG 22146 / PsJN) (Burkholderia phytofirmans).